Reading from the N-terminus, the 175-residue chain is SKP1-like protein 20 (175 aa).

An interaction with the F-box domain of F-box proteins region spans residues 117–175 (ILAANYLNIKGLLDLTCQTVADMIKGKTPEEIRKTFNIKNDFTPEEEEEVRRENQWAFE).

This sequence belongs to the SKP1 family. In terms of assembly, part of a SCF (SKP1-CUL1-F-box protein) E3 ubiquitin-protein ligase complex. Interacts with rice black streaked dwarf virus RBSDV protein P7-2. Is able to form the SCF complex together with CUL1 and the viral P7-2 protein. Interacts with D3.

It is found in the nucleus. It functions in the pathway protein modification; protein ubiquitination. In terms of biological role, involved in ubiquitination and subsequent proteasomal degradation of target proteins. Together with CUL1, a RING-box and a F-box protein, it forms a SCF E3 ubiquitin ligase complex. The functional specificity of this complex depends on the type of F-box protein. In the SCF complex, it serves as an adapter that links the F-box protein to CUL1. The chain is SKP1-like protein 20 from Oryza sativa subsp. japonica (Rice).